Reading from the N-terminus, the 423-residue chain is Serine hydroxymethyltransferase (423 aa).

A (6S)-5,6,7,8-tetrahydrofolate-binding site is contributed by 121-123 (GHI). The residue at position 227 (lysine 227) is an N6-(pyridoxal phosphate)lysine. (6S)-5,6,7,8-tetrahydrofolate is bound at residue glutamate 242.

Belongs to the SHMT family. As to quaternary structure, homodimer. The cofactor is pyridoxal 5'-phosphate.

The protein resides in the cytoplasm. The catalysed reaction is 5,10-methylenetetrahydromethanopterin + glycine + H2O = 5,6,7,8-tetrahydromethanopterin + L-serine. The protein operates within amino-acid biosynthesis; glycine biosynthesis; glycine from L-serine: step 1/1. Its function is as follows. Catalyzes the reversible interconversion of serine and glycine with tetrahydromethanopterin (H4MPT) serving as the one-carbon carrier. Also exhibits a pteridine-independent aldolase activity toward beta-hydroxyamino acids, producing glycine and aldehydes, via a retro-aldol mechanism. The sequence is that of Serine hydroxymethyltransferase from Methanothermobacter marburgensis (strain ATCC BAA-927 / DSM 2133 / JCM 14651 / NBRC 100331 / OCM 82 / Marburg) (Methanobacterium thermoautotrophicum).